We begin with the raw amino-acid sequence, 273 residues long: Dermonecrotic toxin LdSicTox-alphaIB3aiii (273 aa).

His5 is a catalytic residue. Mg(2+) contacts are provided by Glu25 and Asp27. His41 serves as the catalytic Nucleophile. 2 cysteine pairs are disulfide-bonded: Cys45–Cys51 and Cys47–Cys190. Asp85 is a Mg(2+) binding site.

This sequence belongs to the arthropod phospholipase D family. Class II subfamily. Mg(2+) is required as a cofactor. In terms of tissue distribution, expressed by the venom gland.

It localises to the secreted. The catalysed reaction is an N-(acyl)-sphingosylphosphocholine = an N-(acyl)-sphingosyl-1,3-cyclic phosphate + choline. The enzyme catalyses an N-(acyl)-sphingosylphosphoethanolamine = an N-(acyl)-sphingosyl-1,3-cyclic phosphate + ethanolamine. It catalyses the reaction a 1-acyl-sn-glycero-3-phosphocholine = a 1-acyl-sn-glycero-2,3-cyclic phosphate + choline. It carries out the reaction a 1-acyl-sn-glycero-3-phosphoethanolamine = a 1-acyl-sn-glycero-2,3-cyclic phosphate + ethanolamine. Its function is as follows. Dermonecrotic toxins cleave the phosphodiester linkage between the phosphate and headgroup of certain phospholipids (sphingolipid and lysolipid substrates), forming an alcohol (often choline) and a cyclic phosphate. This toxin acts on sphingomyelin (SM). It may also act on ceramide phosphoethanolamine (CPE), lysophosphatidylcholine (LPC) and lysophosphatidylethanolamine (LPE), but not on lysophosphatidylserine (LPS), and lysophosphatidylglycerol (LPG). It acts by transphosphatidylation, releasing exclusively cyclic phosphate products as second products. Induces dermonecrosis, hemolysis, increased vascular permeability, edema, inflammatory response, and platelet aggregation. The chain is Dermonecrotic toxin LdSicTox-alphaIB3aiii from Loxosceles deserta (Desert recluse spider).